The chain runs to 412 residues: MTKIKVANPIVEMDGDEQTRIIWHLIRDKLVLPYLDVDLKYYDLSVEYRDQTNDQVTVDSATATLKYGVAVKCATITPDEARVEEFHLKKMWKSPNGTIRNILGGTVFREPIIIPRIPRLVPQWEKPIIIGRHAFGDQYKATDVIVPEEGELRLVYKSKSGTHDVDLKVFDYPEHGGVAMMMYNTTDSIEGFAKASFELAIERKLPLYSTTKNTILKKYDGKFKDVFEAMYARSYKEKFESLGIWYEHRLIDDMVAQMLKSKGGYIIAMKNYDGDVESDIVAQGFGSLGLMTSVLITPDGKTFESEAAHGTVTRHFRQHQQGKETSTNSIASIFAWTRGIIQRGKLDNTPDVVKFGQILESATVNTVQEDGIMTKDLALILGKSERSAYVTTEEFIDAVESRLKKEFEAAAL.

NADP(+) contacts are provided by residues 75-77 and R82; that span reads TIT. T77 is a binding site for substrate. Residues 94-100, R109, and R132 each bind substrate; that span reads SPNGTIR. D252 contacts Mn(2+). K260 is a binding site for NADP(+). Residue D275 participates in Mn(2+) binding. NADP(+) is bound by residues 310 to 315 and N328; that span reads GTVTRH.

It belongs to the isocitrate and isopropylmalate dehydrogenases family. As to quaternary structure, homodimer. Mg(2+) serves as cofactor. It depends on Mn(2+) as a cofactor. The N-terminus is blocked.

The protein resides in the cytoplasm. It carries out the reaction D-threo-isocitrate + NADP(+) = 2-oxoglutarate + CO2 + NADPH. Its activity is regulated as follows. By catabolite repression. May function in the production of NADPH for fatty acid and sterol synthesis. This Saccharomyces cerevisiae (strain ATCC 204508 / S288c) (Baker's yeast) protein is Isocitrate dehydrogenase [NADP] cytoplasmic (IDP2).